The chain runs to 161 residues: Large ribosomal subunit protein uL30m (161 aa).

The N-terminal 34 residues, 1-34, are a transit peptide targeting the mitochondrion; sequence MAGILRLVVQRPPGGLQTVTKGVESLIGTDWIRH.

Belongs to the universal ribosomal protein uL30 family. As to quaternary structure, component of the mitochondrial ribosome large subunit (39S) which comprises a 16S rRNA and about 50 distinct proteins.

It localises to the mitochondrion. This chain is Large ribosomal subunit protein uL30m (MRPL30), found in Macaca fascicularis (Crab-eating macaque).